We begin with the raw amino-acid sequence, 80 residues long: Large ribosomal subunit protein uL30 (80 aa).

Belongs to the universal ribosomal protein uL30 family. As to quaternary structure, part of the 50S ribosomal subunit.

This Vesicomyosocius okutanii subsp. Calyptogena okutanii (strain HA) protein is Large ribosomal subunit protein uL30.